A 441-amino-acid polypeptide reads, in one-letter code: uncharacterized protein (441 aa).

The first 23 residues, 1 to 23 (MSRKYLLSLLLVGALVISVVASG), serve as a signal peptide directing secretion. Cys-24 carries the N-acetylcysteine modification. Residue Cys-24 is the site of S-archaeol cysteine attachment.

The protein belongs to the bacterial solute-binding protein 1 family.

The protein localises to the cell membrane. In terms of biological role, probably part of a binding-protein-dependent transport system PH1214/15/16. This is an uncharacterized protein from Pyrococcus horikoshii (strain ATCC 700860 / DSM 12428 / JCM 9974 / NBRC 100139 / OT-3).